Reading from the N-terminus, the 1353-residue chain is Xanthine dehydrogenase 2 (1353 aa).

A 2Fe-2S ferredoxin-type domain is found at 7 to 93 (MEAIMYVNGV…GMHVISIEGV (87 aa)). 8 residues coordinate [2Fe-2S] cluster: C45, C50, C53, C75, C115, C118, C151, and C153. Residues 249–434 (GGNEGITWYR…LSVFLPWTRP (186 aa)) enclose the FAD-binding PCMH-type domain. FAD-binding positions include 277–284 (LLVGNTEV), F357, 367–371 (CIGGN), D380, L424, and K442. Residues Q788 and F819 each coordinate Mo-molybdopterin. Substrate is bound by residues E823 and R901. Residue R933 participates in Mo-molybdopterin binding. Residues F935 and T1031 each coordinate substrate. Residue A1100 coordinates Mo-molybdopterin. E1289 serves as the catalytic Proton acceptor.

Belongs to the xanthine dehydrogenase family. As to quaternary structure, homodimer. [2Fe-2S] cluster serves as cofactor. It depends on FAD as a cofactor. The cofactor is Mo-molybdopterin. As to expression, expressed in roots, leaves, stems, flowers and siliques.

The enzyme catalyses xanthine + NAD(+) + H2O = urate + NADH + H(+). It carries out the reaction hypoxanthine + NAD(+) + H2O = xanthine + NADH + H(+). In terms of biological role, key enzyme involved in purine catabolism. Catalyzes the oxidation of hypoxanthine to xanthine and the oxidation of xanthine to urate. Regulates the level of ureides and plays a role during plant growth and development and senescence. The polypeptide is Xanthine dehydrogenase 2 (XDH2) (Arabidopsis thaliana (Mouse-ear cress)).